We begin with the raw amino-acid sequence, 188 residues long: dCTP deaminase (188 aa).

DCTP is bound by residues 111–116 (KSTYAR), 135–137 (TLE), Q156, Y170, and Q180. The Proton donor/acceptor role is filled by E137.

It belongs to the dCTP deaminase family. As to quaternary structure, homotrimer.

The catalysed reaction is dCTP + H2O + H(+) = dUTP + NH4(+). Its pathway is pyrimidine metabolism; dUMP biosynthesis; dUMP from dCTP (dUTP route): step 1/2. In terms of biological role, catalyzes the deamination of dCTP to dUTP. In Herminiimonas arsenicoxydans, this protein is dCTP deaminase.